Reading from the N-terminus, the 1807-residue chain is Integrin beta-4 (1807 aa).

The first 27 residues, 1–27, serve as a signal peptide directing secretion; the sequence is MAGLCSSPWVKLLLAVVLSAGLPGNMA. Residues 28-713 are Extracellular-facing; the sequence is NRCKKAQVKS…KKKDCLPAPS (686 aa). Residues 29–73 form the PSI domain; the sequence is RCKKAQVKSCTECIRVDKSCAYCTDELFKERRCNTQADVLAAGCR. 8 disulfides stabilise this stretch: C30–C48, C38–C456, C41–C61, C51–C72, C245–C288, C458–C477, C469–C480, and C482–C491. Residues 131-340 enclose the VWFA domain; it reads DLYILMDFSN…SYYEKLHKYF (210 aa). 2 residues coordinate Mg(2+): S139 and S141. The Ca(2+) site is built by S141, D144, D145, and D176. The tract at residues 194–199 is involved in NRG1- and IGF1-binding; the sequence is WPNSDP. N228, D230, P232, and E233 together coordinate Ca(2+). E233 serves as a coordination point for Mg(2+). An N-linked (GlcNAc...) asparagine glycan is attached at N327. E350 serves as a coordination point for Ca(2+). I-EGF domains are found at residues 458 to 492, 493 to 538, 539 to 575, and 576 to 617; these read CELQ…KTCN, CSTG…HFCE, YDNF…RSCD, and CPLS…TTCE. N-linked (GlcNAc...) asparagine glycosylation is present at N492. 11 disulfides stabilise this stretch: C493/C521, C504/C519, C513/C524, C526/C537, C544/C558, C552/C563, C565/C574, C576/C599, C583/C597, C591/C602, and C604/C616. N580 carries an N-linked (GlcNAc...) asparagine glycan. N619 is a glycosylation site (N-linked (GlcNAc...) asparagine). 4 disulfides stabilise this stretch: C628–C673, C634–C653, C637–C650, and C682–C708. A glycan (N-linked (GlcNAc...) asparagine) is linked at N697. A helical transmembrane segment spans residues 714-734; that stretch reads WWLIPLLIFLLLLLVLLLLLC. The palmitoylated on several cysteines stretch occupies residues 734-751; the sequence is CWKYCACCKACLGLLPCC. At 735–1807 the chain is on the cytoplasmic side; it reads WKYCACCKAC…THMDQQFFQT (1073 aa). Residues S773, S1071, and S1121 each carry the phosphoserine modification. The Calx-beta domain maps to 981 to 1086; that stretch reads VNITIIKEQA…QVRRFQVQLS (106 aa). Residues 1119-1141 form a disordered region; that stretch reads SASPPLPRGDLGAPQNPNAKAAG. Fibronectin type-III domains follow at residues 1131–1220 and 1224–1323; these read APQN…THQE and EPGR…TQPK. 3 positions are modified to phosphoserine: S1386, S1389, and S1405. Residue T1418 is modified to Phosphothreonine. At S1425 the chain carries Phosphoserine. The residue at position 1514 (T1514) is a Phosphothreonine. Fibronectin type-III domains lie at 1514–1609 and 1627–1723; these read TPTR…VHPQ and APGP…SQDG. S1776 carries the post-translational modification Phosphoserine.

Belongs to the integrin beta chain family. As to quaternary structure, heterodimer of an alpha and a beta subunit. Beta-4 associates with alpha-6. Interacts (via cytoplasmic region) with COL17A1 (via cytoplasmic region). Interacts (via cytoplasmic region) with DST isoform 3 (via N-terminus). Interacts (via cytoplasmic domain) with DST (via N-terminus). Interacts with RAC1. ITGA6:ITGB4 is found in a ternary complex with NRG1 and ERBB3. ITGA6:ITGB4 is found in a ternary complex with IGF1 and IGF1R. ITGA6:ITGB4 interacts with IGF2. Interacts with TMEM268; this interaction prevents ITGB4 degradation. In terms of processing, palmitoylated by DHHC3 at several cysteines of the membrane-proximal region, enhancing stability and cell surface expression. Palmitoylation also promotes secondary association with tertaspanins.

The protein resides in the cell membrane. It localises to the cell junction. The protein localises to the hemidesmosome. Its function is as follows. Integrin alpha-6/beta-4 is a receptor for laminin. It plays a critical structural role in the hemidesmosome of epithelial cells. Is required for the regulation of keratinocyte polarity and motility. ITGA6:ITGB4 binds to NRG1 (via EGF domain) and this binding is essential for NRG1-ERBB signaling. ITGA6:ITGB4 binds to IGF1 and this binding is essential for IGF1 signaling. ITGA6:ITGB4 binds to IGF2 and this binding is essential for IGF2 signaling. The protein is Integrin beta-4 (Itgb4) of Rattus norvegicus (Rat).